The chain runs to 399 residues: Phosphoglycerate kinase (399 aa).

Residues 21–23, Arg-37, 60–63, Arg-119, and Arg-152 each bind substrate; these read DFN and HLGR. ATP-binding positions include Lys-205, Gly-296, Glu-327, and 353 to 356; that span reads GGDT.

It belongs to the phosphoglycerate kinase family. In terms of assembly, monomer.

The protein localises to the cytoplasm. It carries out the reaction (2R)-3-phosphoglycerate + ATP = (2R)-3-phospho-glyceroyl phosphate + ADP. Its pathway is carbohydrate degradation; glycolysis; pyruvate from D-glyceraldehyde 3-phosphate: step 2/5. This is Phosphoglycerate kinase from Sulfurimonas denitrificans (strain ATCC 33889 / DSM 1251) (Thiomicrospira denitrificans (strain ATCC 33889 / DSM 1251)).